Reading from the N-terminus, the 348-residue chain is 4-hydroxy-2-oxovalerate aldolase 1 (348 aa).

One can recognise a Pyruvate carboxyltransferase domain in the interval isoleucine 8 to glutamine 260. Residue arginine 16 to aspartate 17 coordinates substrate. Aspartate 17 provides a ligand contact to Mn(2+). The Proton acceptor role is filled by histidine 20. Positions 170 and 199 each coordinate substrate. Residues histidine 199 and histidine 201 each coordinate Mn(2+). A substrate-binding site is contributed by tyrosine 290.

Belongs to the 4-hydroxy-2-oxovalerate aldolase family.

It catalyses the reaction (S)-4-hydroxy-2-oxopentanoate = acetaldehyde + pyruvate. The protein is 4-hydroxy-2-oxovalerate aldolase 1 of Cupriavidus metallidurans (strain ATCC 43123 / DSM 2839 / NBRC 102507 / CH34) (Ralstonia metallidurans).